The chain runs to 129 residues: Large ribosomal subunit protein eL32 (129 aa).

This sequence belongs to the eukaryotic ribosomal protein eL32 family.

The sequence is that of Large ribosomal subunit protein eL32 (rpl32e) from Archaeoglobus fulgidus (strain ATCC 49558 / DSM 4304 / JCM 9628 / NBRC 100126 / VC-16).